The sequence spans 92 residues: Small ribosomal subunit protein uS19 (92 aa).

This sequence belongs to the universal ribosomal protein uS19 family.

Functionally, protein S19 forms a complex with S13 that binds strongly to the 16S ribosomal RNA. The polypeptide is Small ribosomal subunit protein uS19 (Lactococcus lactis subsp. lactis (strain IL1403) (Streptococcus lactis)).